The following is a 308-amino-acid chain: D-alanine--D-alanine ligase (308 aa).

Positions 103-302 (KTVMATAGVP…FDELVQWMVE (200 aa)) constitute an ATP-grasp domain. 130–184 (MAPPYVIKPVADGSSVGVFIVTEDQAHPPQELFRDDWPHGEELLVEKYIAGRELT) serves as a coordination point for ATP. Mg(2+) contacts are provided by Asp252, Glu269, and Asn271.

Belongs to the D-alanine--D-alanine ligase family. The cofactor is Mg(2+). Mn(2+) serves as cofactor.

Its subcellular location is the cytoplasm. The enzyme catalyses 2 D-alanine + ATP = D-alanyl-D-alanine + ADP + phosphate + H(+). Its pathway is cell wall biogenesis; peptidoglycan biosynthesis. Its function is as follows. Cell wall formation. The polypeptide is D-alanine--D-alanine ligase (Afipia carboxidovorans (strain ATCC 49405 / DSM 1227 / KCTC 32145 / OM5) (Oligotropha carboxidovorans)).